A 297-amino-acid chain; its full sequence is 4-hydroxy-tetrahydrodipicolinate synthase (297 aa).

Threonine 47 serves as a coordination point for pyruvate. The Proton donor/acceptor role is filled by tyrosine 135. The active-site Schiff-base intermediate with substrate is the lysine 163. Residue isoleucine 205 coordinates pyruvate.

The protein belongs to the DapA family. In terms of assembly, homotetramer; dimer of dimers.

The protein resides in the cytoplasm. The enzyme catalyses L-aspartate 4-semialdehyde + pyruvate = (2S,4S)-4-hydroxy-2,3,4,5-tetrahydrodipicolinate + H2O + H(+). Its pathway is amino-acid biosynthesis; L-lysine biosynthesis via DAP pathway; (S)-tetrahydrodipicolinate from L-aspartate: step 3/4. Its function is as follows. Catalyzes the condensation of (S)-aspartate-beta-semialdehyde [(S)-ASA] and pyruvate to 4-hydroxy-tetrahydrodipicolinate (HTPA). In Dehalococcoides mccartyi (strain CBDB1), this protein is 4-hydroxy-tetrahydrodipicolinate synthase.